The following is a 601-amino-acid chain: Ribosomal oxygenase 1 (601 aa).

The span at 1–11 shows a compositional bias: basic and acidic residues; sequence MAACGAEERQR. A disordered region spans residues 1–149; it reads MAACGAEERQ…PGGGGVPGLL (149 aa). Positions 61–70 are enriched in low complexity; that stretch reads ERAAPPQGAA. Residues 73–87 show a composition bias toward basic and acidic residues; that stretch reads DRVERAGSSEAKQGD. A JmjC domain is found at 254-399; that stretch reads CSLRLLSPQA…DFLEKLLPAA (146 aa). Positions 300, 302, and 365 each coordinate Fe cation.

This sequence belongs to the ROX family. NO66 subfamily. Fe(2+) serves as cofactor.

Its subcellular location is the nucleus. The protein localises to the nucleolus. The protein resides in the nucleoplasm. The catalysed reaction is N(6),N(6)-dimethyl-L-lysyl(36)-[histone H3] + 2 2-oxoglutarate + 2 O2 = L-lysyl(36)-[histone H3] + 2 formaldehyde + 2 succinate + 2 CO2. The enzyme catalyses N(6)-methyl-L-lysyl-[protein] + 2-oxoglutarate + O2 = L-lysyl-[protein] + formaldehyde + succinate + CO2. It catalyses the reaction L-histidyl-[protein] + 2-oxoglutarate + O2 = (3S)-3-hydroxy-L-histidyl-[protein] + succinate + CO2. In terms of biological role, oxygenase that can act as both a histone lysine demethylase and a ribosomal histidine hydroxylase. Specifically demethylates 'Lys-4' (H3K4me) and 'Lys-36' (H3K36me) of histone H3, thereby playing a central role in histone code. Preferentially demethylates trimethylated H3 'Lys-4' (H3K4me3) and monomethylated H3 'Lys-4' (H3K4me1) residues, while it has weaker activity for dimethylated H3 'Lys-36' (H3K36me2). Also catalyzes demethylation of non-histone proteins. Also catalyzes the hydroxylation of 60S ribosomal protein L8 on 'His-216', thereby playing a role in ribosome biogenesis. In Gallus gallus (Chicken), this protein is Ribosomal oxygenase 1 (RIOX1).